The primary structure comprises 526 residues: Flavonoid 3'-monooxygenase CYP75B3 (526 aa).

The chain crosses the membrane as a helical span at residues L6 to L26. C461 serves as a coordination point for heme.

This sequence belongs to the cytochrome P450 family. The cofactor is heme.

Its subcellular location is the membrane. It carries out the reaction a 3'-unsubstituted flavone + reduced [NADPH--hemoprotein reductase] + O2 = a 3'-hydroxyflavone + oxidized [NADPH--hemoprotein reductase] + H2O + H(+). Its pathway is secondary metabolite biosynthesis; flavonoid biosynthesis. Its function is as follows. Catalyzes the 3'-hydroxylation of the flavonoid B-ring to the 3',4'-hydroxylated state. Catalyzes the 3'-hydroxylation of apigenin to generate luteolin. The protein is Flavonoid 3'-monooxygenase CYP75B3 of Oryza sativa subsp. japonica (Rice).